The sequence spans 490 residues: MNWSNTPSFLEKQRQRLKRYQFQIKVSEQGRVVSVGDGIIWIKGLPGAAIDEILISEDECCIAMVFHLTEELVGAVMLVQTKKLKAGTPIFPLKRVLSIPVGDKLLGRVIDPLGHPLDGGEIPPHEEQGLLDRLSPHILHRDFVNRPLYTGNKMLDNLIPIGKGQRELLIGDNGLGKSALALDIVMNQKDKKVYCVYVLIGQKRSTVSSTIQLLKKANALDYTTVVVAQATALPGLLYLAPFAGCAIAEHWMKKGLDTLVVYDDLSAHANSYRELSLLLRRPPGREAFPADIFYLHSRLLERSTCLSPAMGGGSMTALPIIETKEGEMATYIPTNLISITDGQIFFDESLFSSGFLPAIDITKSVSRVGAKAQHPQIKKESGRMKLDYLQFLDLELFTRFGAKLDAKMQKQIQKGRVLREILKQERFSPLPIEFQLAWLIAYNEGFFDESNLEDIPQILKKIEKEIKQSNLSLGSPREQWKKAIKEWLMA.

Residue 171–178 (GDNGLGKS) coordinates ATP.

Belongs to the ATPase alpha/beta chains family. As to quaternary structure, F-type ATPases have 2 components, CF(1) - the catalytic core - and CF(0) - the membrane proton channel. CF(1) has five subunits: alpha(3), beta(3), gamma(1), delta(1), epsilon(1). CF(0) has three main subunits: a(1), b(2) and c(9-12). The alpha and beta chains form an alternating ring which encloses part of the gamma chain. CF(1) is attached to CF(0) by a central stalk formed by the gamma and epsilon chains, while a peripheral stalk is formed by the delta and b chains.

The protein resides in the cell inner membrane. It carries out the reaction ATP + H2O + 4 H(+)(in) = ADP + phosphate + 5 H(+)(out). In terms of biological role, produces ATP from ADP in the presence of a proton gradient across the membrane. The alpha chain is a regulatory subunit. This is ATP synthase subunit alpha 1 from Legionella pneumophila (strain Corby).